Consider the following 85-residue polypeptide: Small ribosomal subunit protein bS16c (85 aa).

It belongs to the bacterial ribosomal protein bS16 family.

It is found in the plastid. Its subcellular location is the chloroplast. The protein is Small ribosomal subunit protein bS16c of Agrostis stolonifera (Creeping bentgrass).